Consider the following 161-residue polypeptide: N5-carboxyaminoimidazole ribonucleotide mutase (161 aa).

Residues serine 9, aspartate 12, and arginine 39 each coordinate substrate.

The protein belongs to the AIR carboxylase family. Class I subfamily.

It catalyses the reaction 5-carboxyamino-1-(5-phospho-D-ribosyl)imidazole + H(+) = 5-amino-1-(5-phospho-D-ribosyl)imidazole-4-carboxylate. It functions in the pathway purine metabolism; IMP biosynthesis via de novo pathway; 5-amino-1-(5-phospho-D-ribosyl)imidazole-4-carboxylate from 5-amino-1-(5-phospho-D-ribosyl)imidazole (N5-CAIR route): step 2/2. In terms of biological role, catalyzes the conversion of N5-carboxyaminoimidazole ribonucleotide (N5-CAIR) to 4-carboxy-5-aminoimidazole ribonucleotide (CAIR). This chain is N5-carboxyaminoimidazole ribonucleotide mutase, found in Vibrio cholerae serotype O1 (strain ATCC 39315 / El Tor Inaba N16961).